The primary structure comprises 153 residues: UPF0756 membrane protein Lm4b_01579 (153 aa).

The next 4 membrane-spanning stretches (helical) occupy residues 6–26 (MLFL…SLII), 54–74 (WGVT…QIGF), 80–100 (SFKS…SILA), and 117–137 (LVFG…GPVI).

Belongs to the UPF0756 family.

The protein localises to the cell membrane. The chain is UPF0756 membrane protein Lm4b_01579 from Listeria monocytogenes serotype 4b (strain CLIP80459).